Consider the following 157-residue polypeptide: Small ribosomal subunit protein uS7 (157 aa).

The protein belongs to the universal ribosomal protein uS7 family. Part of the 30S ribosomal subunit. Contacts proteins S9 and S11.

In terms of biological role, one of the primary rRNA binding proteins, it binds directly to 16S rRNA where it nucleates assembly of the head domain of the 30S subunit. Is located at the subunit interface close to the decoding center, probably blocks exit of the E-site tRNA. This chain is Small ribosomal subunit protein uS7, found in Verminephrobacter eiseniae (strain EF01-2).